The following is a 149-amino-acid chain: 5-hydroxytryptamine receptor 1E (149 aa).

The Extracellular segment spans residues histidine 1–tyrosine 6. A helical membrane pass occupies residues leucine 7–valine 31. At methionine 32–tyrosine 39 the chain is on the cytoplasmic side. Residues phenylalanine 40–leucine 65 traverse the membrane as a helical segment. The cysteines at positions 42 and 120 are disulfide-linked. Positions 49 and 53 each coordinate serotonin. Positions aspartate 66–tyrosine 68 match the DRY motif; important for ligand-induced conformation changes motif. Residues aspartate 66–arginine 85 lie on the Extracellular side of the membrane. A helical membrane pass occupies residues alanine 86 to proline 104. At leucine 105–tyrosine 149 the chain is on the cytoplasmic side.

It belongs to the G-protein coupled receptor 1 family.

Its subcellular location is the cell membrane. G-protein coupled receptor for 5-hydroxytryptamine (serotonin). Also functions as a receptor for various alkaloids and psychoactive substances. Ligand binding causes a conformation change that triggers signaling via guanine nucleotide-binding proteins (G proteins) and modulates the activity of downstream effectors, such as adenylate cyclase. HTR1E is coupled to G(i)/G(o) G alpha proteins and mediates inhibitory neurotransmission by inhibiting adenylate cyclase activity. This chain is 5-hydroxytryptamine receptor 1E (HTR1E), found in Sus scrofa (Pig).